The following is a 642-amino-acid chain: Threonine--tRNA ligase (642 aa).

Residues 1–61 form the TGS domain; it reads MPVITLPDGS…ENDAQLAIIT (61 aa). The segment at 243–534 is catalytic; it reads DHRKIGKQLD…LTEEFAGFFP (292 aa). An N6-acetyllysine modification is found at Lys-286. Residues Cys-334, His-385, and His-511 each coordinate Zn(2+).

It belongs to the class-II aminoacyl-tRNA synthetase family. In terms of assembly, homodimer. Requires Zn(2+) as cofactor.

It is found in the cytoplasm. It carries out the reaction tRNA(Thr) + L-threonine + ATP = L-threonyl-tRNA(Thr) + AMP + diphosphate + H(+). Functionally, catalyzes the attachment of threonine to tRNA(Thr) in a two-step reaction: L-threonine is first activated by ATP to form Thr-AMP and then transferred to the acceptor end of tRNA(Thr). Also edits incorrectly charged L-seryl-tRNA(Thr). This is Threonine--tRNA ligase from Escherichia fergusonii (strain ATCC 35469 / DSM 13698 / CCUG 18766 / IAM 14443 / JCM 21226 / LMG 7866 / NBRC 102419 / NCTC 12128 / CDC 0568-73).